A 115-amino-acid chain; its full sequence is Nitrogenase-stabilizing/protective protein NifW (115 aa).

The protein belongs to the NifW family. As to quaternary structure, homotrimer; associates with NifD.

May protect the nitrogenase Fe-Mo protein from oxidative damage. The polypeptide is Nitrogenase-stabilizing/protective protein NifW (Methylobacterium sp. (strain 4-46)).